The following is a 269-amino-acid chain: BAG family molecular chaperone regulator 4 (269 aa).

Residues 1-40 form a disordered region; it reads MMHNSTEESEWEVRPGGMLVQRRDDAASSDHKPLQDPDSA. Basic and acidic residues predominate over residues 21–35; sequence QRRDDAASSDHKPLQ. The Ubiquitin-like domain occupies 46–122; that stretch reads QTIRITVSHG…LVVVVEDTNK (77 aa). Positions 138 to 219 constitute a BAG domain; it reads AIAAVNAVTG…NLQEAVDKLK (82 aa). A disordered region spans residues 241–269; it reads SFGNGVGSLNPPPPASPSANVTQDWEKFD.

As to quaternary structure, binds to the ATPase domain of HSP70/HSC70 chaperones. Interacts with HSP70-1. Detected in stems, leaves, flowers and roots.

In terms of biological role, co-chaperone that regulates diverse cellular pathways, such as programmed cell death and stress responses. The protein is BAG family molecular chaperone regulator 4 (BAG4) of Arabidopsis thaliana (Mouse-ear cress).